Reading from the N-terminus, the 211-residue chain is Peptide methionine sulfoxide reductase MsrA (211 aa).

The active site involves Cys60.

This sequence belongs to the MsrA Met sulfoxide reductase family.

It catalyses the reaction L-methionyl-[protein] + [thioredoxin]-disulfide + H2O = L-methionyl-(S)-S-oxide-[protein] + [thioredoxin]-dithiol. The enzyme catalyses [thioredoxin]-disulfide + L-methionine + H2O = L-methionine (S)-S-oxide + [thioredoxin]-dithiol. Its function is as follows. Has an important function as a repair enzyme for proteins that have been inactivated by oxidation. Catalyzes the reversible oxidation-reduction of methionine sulfoxide in proteins to methionine. This chain is Peptide methionine sulfoxide reductase MsrA, found in Methanosarcina mazei (strain ATCC BAA-159 / DSM 3647 / Goe1 / Go1 / JCM 11833 / OCM 88) (Methanosarcina frisia).